Here is a 694-residue protein sequence, read N- to C-terminus: Nuclear cap-binding protein subunit 3 (694 aa).

The interval 1 to 47 (MAAVRSLRVSVKSDSASDRSESDSESDSDRDAREAEPMEVEEGEVEL) is disordered. A compositionally biased stretch (basic and acidic residues) spans 15-36 (SASDRSESDSESDSDRDAREAE). Positions 37–47 (PMEVEEGEVEL) are enriched in acidic residues. Residues 126-187 (EALHMSGVDD…LSRMPDKEEV (62 aa)) form an RNA recognition motif (RRM) domain region. Positions 155-158 (WIDD) match the WLDD motif; essential for 7-methylguanosine-containing mRNA cap binding motif. 3 disordered regions span residues 183–277 (DKEE…VKPF), 336–430 (ILKT…MDYD), and 461–694 (LRNS…DSDS). Positions 189–203 (NTDSSKPSELPVQTQ) are enriched in polar residues. Over residues 212–235 (DDDDDDDEEEEGEVDDDDDDDEED) the composition is skewed to acidic residues. A compositionally biased stretch (basic and acidic residues) spans 236 to 264 (EKARDIEDETEKKPQETRETSLSQAERDS). Over residues 368 to 386 (EPIEEEEEEEEDGEEDMDA) the composition is skewed to acidic residues. Basic and acidic residues predominate over residues 387–404 (DDRVVEYKDRGEKERGPR). The span at 477-496 (IGGGGGGGSGGAVEGRGEGG) shows a compositional bias: gly residues. Composition is skewed to basic and acidic residues over residues 501–517 (TSEK…EKRQ), 563–595 (SRRE…DKKT), and 605–618 (SHKD…DKPS). Positions 634 to 646 (DSDGVEDEDEEDD) are enriched in acidic residues. Low complexity predominate over residues 685–694 (DGSNGSDSDS).

This sequence belongs to the NCBP3 family. Component of an alternative cap-binding complex (CBC) composed of NCBP1/CBP80 and NCBP3.

The protein localises to the nucleus. Its subcellular location is the cytoplasm. Its function is as follows. Associates with NCBP1/CBP80 to form an alternative cap-binding complex (CBC) which plays a key role in mRNA export. NCBP3 serves as adapter protein linking the capped RNAs (m7GpppG-capped RNA) to NCBP1/CBP80. Unlike the conventional CBC with NCBP2 which binds both small nuclear RNA (snRNA) and messenger (mRNA) and is involved in their export from the nucleus, the alternative CBC with NCBP3 does not bind snRNA and associates only with mRNA thereby playing a role in only mRNA export. The sequence is that of Nuclear cap-binding protein subunit 3 from Danio rerio (Zebrafish).